We begin with the raw amino-acid sequence, 469 residues long: Mitochondrial adenyl nucleotide antiporter SLC25A25 (469 aa).

Residues 1-165 are regulatory N-terminal domain; it reads MLCLCLYVPI…LYWKHSTIFD (165 aa). Residues 1 to 189 lie on the Mitochondrial intermembrane side of the membrane; that stretch reads MLCLCLYVPI…ERQTGMWWRH (189 aa). EF-hand domains follow at residues 47-80, 78-113, and 114-149; these read TYRQWKQKIVQAGDKDLDGQLDFEEFVHYLQDHE, DHEKKLRLVFKSLDKKNDGRIDAQEIMQSLRDLGVK, and ISEQQAEKILKSMDKNGTMTIDWNEWRDYHLLHPVE. Ca(2+) contacts are provided by D60, D62, D64, Q66, and E71. The linker region stretch occupies residues 151–160; that stretch reads IPEIILYWKH. The C-terminal transmembrane transporter domain stretch occupies residues 166-469; it reads VGENLTVPDE…LKITLGVQSR (304 aa). Solcar repeat units lie at residues 184 to 270, 278 to 363, and 375 to 463; these read GMWW…MKRL, LRIH…LKNT, and PGVF…LKIT. A helical transmembrane segment spans residues 190–207; the sequence is LVAGGGAGAVSRTCTAPL. The Mitochondrial matrix segment spans residues 208–244; sequence DRLKVLMQVHASRSNNMCIVGGFTQMIREGGAKSLWR. The chain crosses the membrane as a helical span at residues 245–264; that stretch reads GNGINVLKIAPESAIKFMAY. Topologically, residues 265-287 are mitochondrial intermembrane; the sequence is EQMKRLVGSDQETLRIHERLVAG. Residues 288–301 traverse the membrane as a helical segment; the sequence is SLAGAIAQSSIYPM. Residues 302 to 337 are Mitochondrial matrix-facing; sequence EVLKTRMALRKTGQYSGMLDCARRILAKEGVAAFYK. A helical membrane pass occupies residues 338–357; the sequence is GYIPNMLGIIPYAGIDLAVY. The Mitochondrial intermembrane portion of the chain corresponds to 358–380; that stretch reads ETLKNTWLQRYAVNSADPGVFVL. Residues 381–398 traverse the membrane as a helical segment; it reads LACGTISSTCGQLASYPL. Topologically, residues 399 to 437 are mitochondrial matrix; sequence ALVRTRMQAQASIEGAPEVTMSSLFKQILRTEGAFGLYR. The helical transmembrane segment at 438 to 457 threads the bilayer; the sequence is GLAPNFMKVIPAVSISYVVY. The Mitochondrial intermembrane portion of the chain corresponds to 458–469; the sequence is ENLKITLGVQSR.

The protein belongs to the mitochondrial carrier (TC 2.A.29) family.

It is found in the mitochondrion inner membrane. The enzyme catalyses Mg(2+)(out) + phosphate(in) + ATP(out) = Mg(2+)(in) + phosphate(out) + ATP(in). Its activity is regulated as follows. Activated by an increase in cytosolic calcium levels that induce a conformational change of the N-terminal regulatory domain, uncapping the channel and allowing transport. Electroneutral antiporter that most probably mediates the transport of adenyl nucleotides through the inner mitochondrial membrane. Originally identified as an ATP-magnesium/inorganic phosphate antiporter, it could have a broader specificity for adenyl nucleotides. By regulating the mitochondrial matrix adenyl nucleotide pool could adapt to changing cellular energetic demands and indirectly regulate adenyl nucleotide-dependent metabolic pathways. This is Mitochondrial adenyl nucleotide antiporter SLC25A25 from Mus musculus (Mouse).